The following is a 502-amino-acid chain: MEFSVKSGSPEKQRSACIVVGVYEPRRLSGIAEQLDKISEGYISNLLRRGDLEGKPGQMLLLHHVPNVLSERVLLVGCGKERELDERQYKQIITKTIKTLNETGSMEAVCFLTELHVKGRDTYWKVREAVETTQNSLYSFDALKSAKGETRRPLRKLVFNVPTRRELTVGERAIEHGMAVSAGMRLCRDVANMPPNICNPAYLASQARQMGENSEELTVTTVGEEQMAKLGMNSYLAVGRGSDNESIMTVMEYKGAVDNTEKPIVLVGKGLTFDSGGISLKPGEGMDEMKYDMGGAAGVIGAMKALCDMKLPINVVAILAGCENMPSSNAYRPGDILTTMSGQTVEVLNTDAEGRLVLCDVLTYVERFDPELVVDTATLTGACVIALGKHASGLFSGHNPLAHELLNAGEQSGDRAWRLPIWDEYQEHLESPFADMTNLGGRPAGAITAACFLSRFTKKYNWAHIDVAGTAWNSGANKGSTGRPVPLLTQFLINRAGVEQGD.

Residues K269 and D274 each contribute to the Mn(2+) site. The active site involves K281. Mn(2+)-binding residues include D292, D351, and E353. The active site involves R355.

It belongs to the peptidase M17 family. Mn(2+) is required as a cofactor.

Its subcellular location is the cytoplasm. It carries out the reaction Release of an N-terminal amino acid, Xaa-|-Yaa-, in which Xaa is preferably Leu, but may be other amino acids including Pro although not Arg or Lys, and Yaa may be Pro. Amino acid amides and methyl esters are also readily hydrolyzed, but rates on arylamides are exceedingly low.. The enzyme catalyses Release of an N-terminal amino acid, preferentially leucine, but not glutamic or aspartic acids.. Its function is as follows. Presumably involved in the processing and regular turnover of intracellular proteins. Catalyzes the removal of unsubstituted N-terminal amino acids from various peptides. In Shewanella sediminis (strain HAW-EB3), this protein is Probable cytosol aminopeptidase.